A 427-amino-acid chain; its full sequence is ATP-sensitive inward rectifier potassium channel 12 (427 aa).

Residues 1 to 77 (MTASGRTNPY…LADMFTTCVD (77 aa)) are Cytoplasmic-facing. Cysteine 75 carries the post-translational modification S-nitrosocysteine. A helical transmembrane segment spans residues 78–104 (IRWRYMLLIFSLAFLASWLLFGVIFWV). Arginine 79 and arginine 81 together coordinate a 1,2-diacyl-sn-glycero-3-phospho-(1D-myo-inositol-4,5-bisphosphate). Over 105-129 (IAVAHGDLEPAEAHGRTPCVLQVHG) the chain is Extracellular. A disulfide bridge connects residues cysteine 123 and cysteine 155. An intramembrane region (helical; Pore-forming) is located at residues 130–146 (FMAAFLFSIETQTTIGY). K(+)-binding residues include threonine 143, isoleucine 144, glycine 145, and tyrosine 146. Residues 143–148 (TIGYGL) carry the Selectivity filter motif. Topologically, residues 147-155 (GLRCVTEEC) are extracellular. A helical membrane pass occupies residues 156 to 183 (PVAVFMVVAQSIVGCIIDSFMIGAIMAK). A 1,2-diacyl-sn-glycero-3-phospho-(1D-myo-inositol-4,5-bisphosphate) contacts are provided by lysine 183 and lysine 188. At 184-427 (MARPKKRAQT…QRPYRRESEI (244 aa)) the chain is on the cytoplasmic side. The span at 387 to 396 (DEEDEVDGEQ) shows a compositional bias: acidic residues. Residues 387–427 (DEEDEVDGEQDSLGPQARRDFDRPQAGTALEQRPYRRESEI) are disordered. The short motif at 425 to 427 (SEI) is the PDZ-binding element.

Belongs to the inward rectifier-type potassium channel (TC 1.A.2.1) family. KCNJ12 subfamily. Homotetramer. Forms heteromer with KCNJ4. Association, via its PDZ-recognition domain, with LIN7A, LIN7B, LIN7C, DLG1, CASK and APBA1 plays a key role in its localization and trafficking.

The protein localises to the membrane. It catalyses the reaction K(+)(in) = K(+)(out). Activated by phosphatidylinositol 4,5-biphosphate (PtdIns(4,5)P2). PtdIns(4,5)P2 binding to the cytoplasmic side of the channel triggers a conformation change leading to channel opening. Inward rectifying potassium channel that probably participates in controlling the resting membrane potential in electrically excitable cells. Probably participates in establishing action potential waveform and excitability of neuronal and muscle tissues. Inward rectifier potassium channels are characterized by a greater tendency to allow potassium to flow into the cell rather than out of it. Their voltage dependence is regulated by the concentration of extracellular potassium; as external potassium is raised, the voltage range of the channel opening shifts to more positive voltages. The inward rectification is mainly due to the blockage of outward current by internal magnesium. The sequence is that of ATP-sensitive inward rectifier potassium channel 12 (KCNJ12) from Bos taurus (Bovine).